Consider the following 181-residue polypeptide: Thioredoxin-like protein CITRX2, chloroplastic (181 aa).

Residues 1–70 (MQAATLSFQP…PDVATGKYVR (70 aa)) constitute a chloroplast transit peptide. The Thioredoxin domain occupies 72 to 181 (DYLVKKVSAK…MMRDIINNDL (110 aa)). Residues Cys104 and Cys107 each act as nucleophile in the active site. A disulfide bridge connects residues Cys104 and Cys107.

Belongs to the thioredoxin family. Plant CITRX-type subfamily.

The protein resides in the plastid. Its subcellular location is the chloroplast. Probable thiol-disulfide oxidoreductase that may play a role in proper chloroplast development. This Nicotiana benthamiana protein is Thioredoxin-like protein CITRX2, chloroplastic.